Reading from the N-terminus, the 625-residue chain is 1-deoxy-D-xylulose-5-phosphate synthase (625 aa).

Residues His80 and 121–123 (GHS) contribute to the thiamine diphosphate site. Residue Asp152 participates in Mg(2+) binding. Residues 153-154 (GA), Asn181, Tyr290, and Glu371 contribute to the thiamine diphosphate site. Asn181 is a Mg(2+) binding site.

Belongs to the transketolase family. DXPS subfamily. As to quaternary structure, homodimer. Mg(2+) is required as a cofactor. It depends on thiamine diphosphate as a cofactor.

The enzyme catalyses D-glyceraldehyde 3-phosphate + pyruvate + H(+) = 1-deoxy-D-xylulose 5-phosphate + CO2. Its pathway is metabolic intermediate biosynthesis; 1-deoxy-D-xylulose 5-phosphate biosynthesis; 1-deoxy-D-xylulose 5-phosphate from D-glyceraldehyde 3-phosphate and pyruvate: step 1/1. Its function is as follows. Catalyzes the acyloin condensation reaction between C atoms 2 and 3 of pyruvate and glyceraldehyde 3-phosphate to yield 1-deoxy-D-xylulose-5-phosphate (DXP). This is 1-deoxy-D-xylulose-5-phosphate synthase from Haemophilus influenzae (strain ATCC 51907 / DSM 11121 / KW20 / Rd).